A 150-amino-acid polypeptide reads, in one-letter code: Globin-3 (150 aa).

The region spanning 11–150 is the Globin domain; it reads PLTAADKTKI…IICILLNSAY (140 aa). Heme b is bound by residues His74 and His106.

The protein belongs to the globin family. Monomer.

This Mordacia mordax (Southern hemisphere lamprey) protein is Globin-3.